The following is a 233-amino-acid chain: MAAGIRNITTTGQIGDGREAAAVDYVLAHAGAGNIDDVLATIDKFAYEKSMLINVGDEKGTLLDAAVRRADPALALELGTYLGYGALRIARAAPEARVYSVELAEANASNARRIWAHAGVDDRVVCVVGTIGDGGRTLDALTEHGFATGTLDFVFLDHDKKAYLPDLQSILDRGWLHPGSIVVADNVRVPGAPKYRAYMRRQQGMSWNTIEHKTHLEYQTLVPDLVLESEYLG.

Residues valine 55, glutamate 77, 79–80 (GT), and glutamate 102 each bind S-adenosyl-L-methionine. An a divalent metal cation-binding site is contributed by aspartate 157. S-adenosyl-L-methionine is bound at residue aspartate 159. A divalent metal cation is bound by residues aspartate 185 and asparagine 186.

Belongs to the class I-like SAM-binding methyltransferase superfamily. Cation-dependent O-methyltransferase family.

Specifically methylates an O atom of its substrate. This Mycobacterium tuberculosis (strain ATCC 25618 / H37Rv) protein is Probable O-methyltransferase Rv1703c.